The chain runs to 355 residues: MIPRKRYGSKNTDQGVYLGLSKTQVLSPATAGSSSSDIAPLPPPVTLVPPPPDTMSCRDRTQEFLSACKSLQTRQNGIQTNKPALRAVRQRSEFTLMAKRIGKDLSNTFAKLEKLTILAKRKSLFDDKAVEIEELTYIIKQDINSLNKQIAQLQDFVRAKGSQSGRHLQTHSNTIVVSLQSKLASMSNDFKSVLEVRTENLKQQRSRREQFSRAPVSALPLAPNHLGGGAVVLGAESHASKDVAIDMMDSRTSQQLQLIDEQDSYIQSRADTMQNIESTIVELGSIFQQLAHMVKEQEETIQRIDENVLGAQLDVEAAHSEILKYFQSVTSNRWLMVKIFLILIVFFIIFVVFLA.

Topologically, residues 1–333 (MIPRKRYGSK…KYFQSVTSNR (333 aa)) are cytoplasmic. Residues 28–37 (PATAGSSSSD) are compositionally biased toward polar residues. The disordered stretch occupies residues 28-51 (PATAGSSSSDIAPLPPPVTLVPPP). Residues 40-51 (PLPPPVTLVPPP) show a composition bias toward pro residues. Residues 245-247 (IDM) carry the IxM motif; signal for cargo packaging into COPII-coated vesicles motif. In terms of domain architecture, t-SNARE coiled-coil homology spans 263–325 (DSYIQSRADT…EAAHSEILKY (63 aa)). Residues 287-318 (FQQLAHMVKEQEETIQRIDENVLGAQLDVEAA) adopt a coiled-coil conformation. Residues 334 to 354 (WLMVKIFLILIVFFIIFVVFL) form a helical; Anchor for type IV membrane protein membrane-spanning segment. Ala355 is a topological domain (vesicular).

Belongs to the syntaxin family. In terms of assembly, part of a ternary complex containing STX5A, NSFL1C and VCP. Identified in a unique SNARE complex composed of the Golgi SNAREs GOSR1, GOSR2, YKT6 and VTI1A. Component of a SNARE complex consisting of STX5, YKT6, GOSR1 and BET1L. Interacts with BET1L. Interacts with BET1. Interacts with COG4. Interacts with GM130/GOLGA2. Interacts (via IxM motif) with SEC24C and SEC24D; mediates STX5 packaging into COPII-coated vesicles. Interacts with VLDLR; this interaction mediates VLDLR translocation from the endoplasmic reticulum to the plasma membrane.

Its subcellular location is the endoplasmic reticulum-Golgi intermediate compartment membrane. It localises to the golgi apparatus membrane. Functionally, mediates endoplasmic reticulum to Golgi transport. Together with p115/USO1 and GM130/GOLGA2, involved in vesicle tethering and fusion at the cis-Golgi membrane to maintain the stacked and inter-connected structure of the Golgi apparatus. Its function is as follows. Required for Golgi to endoplasmic reticulum retrogade transport, and for intra-Golgi transport. In terms of biological role, (Microbial infection) Required for the efficient production of infectious virion during human cytomegalovirus infection. Mechanistically, participates in the formation of the cytoplasmic viral assembly compartment where tegument acquisition and envelopment occur. The protein is Syntaxin-5 (STX5) of Homo sapiens (Human).